Reading from the N-terminus, the 66-residue chain is Large ribosomal subunit protein bL31 (66 aa).

Zn(2+)-binding residues include cysteine 16, cysteine 18, cysteine 36, and cysteine 39.

Belongs to the bacterial ribosomal protein bL31 family. Type A subfamily. Part of the 50S ribosomal subunit. Zn(2+) serves as cofactor.

In terms of biological role, binds the 23S rRNA. This Sulfurimonas denitrificans (strain ATCC 33889 / DSM 1251) (Thiomicrospira denitrificans (strain ATCC 33889 / DSM 1251)) protein is Large ribosomal subunit protein bL31.